The sequence spans 347 residues: NADH-ubiquinone oxidoreductase chain 2 (347 aa).

Helical transmembrane passes span 3–23, 25–45, 66–86, 111–131, 149–169, 178–198, 201–221, 237–257, 274–294, and 325–345; these read PPILIIIMATIMTGTMIVMLS, HWLLIWIGFEMNMLAIIPILM, ASMLLMMGVTINLLYSGQWVI, FHFWVPEVTQGITLMSGMILL, INTNLLMLMALTSVLVGGWGG, IMAYSSIAHMGWMAAIITYNP, MVLNLTLYILMTLSTFMLFML, FPLITSMILILMLSLGGLPPL, NMIIIPTLMAITALLNLYFYL, and LLPPLIITSTMLLPLTPMLSV.

The protein belongs to the complex I subunit 2 family. In terms of assembly, core subunit of respiratory chain NADH dehydrogenase (Complex I) which is composed of 45 different subunits. Interacts with TMEM242.

Its subcellular location is the mitochondrion inner membrane. It catalyses the reaction a ubiquinone + NADH + 5 H(+)(in) = a ubiquinol + NAD(+) + 4 H(+)(out). Functionally, core subunit of the mitochondrial membrane respiratory chain NADH dehydrogenase (Complex I) which catalyzes electron transfer from NADH through the respiratory chain, using ubiquinone as an electron acceptor. Essential for the catalytic activity and assembly of complex I. In Canis lupus familiaris (Dog), this protein is NADH-ubiquinone oxidoreductase chain 2.